Consider the following 215-residue polypeptide: Adenylate kinase (215 aa).

10-15 (GAGKGT) lines the ATP pocket. The segment at 30 to 59 (STGDMFRKAIKEETELGKEAKSYMDRGELV) is NMP. AMP contacts are provided by residues threonine 31, arginine 36, 57–59 (ELV), 85–88 (GFPR), and glutamine 92. Positions 126–163 (GRRICESCGTTYHLVFNPPKVEGICDIDGGKLYQREDD) are LID. Arginine 127 lines the ATP pocket. Cysteine 130 and cysteine 133 together coordinate Zn(2+). Residue 136–137 (TY) coordinates ATP. Residues cysteine 150 and aspartate 153 each contribute to the Zn(2+) site. Arginine 160 and arginine 171 together coordinate AMP. Lysine 199 lines the ATP pocket.

This sequence belongs to the adenylate kinase family. In terms of assembly, monomer.

Its subcellular location is the cytoplasm. It carries out the reaction AMP + ATP = 2 ADP. The protein operates within purine metabolism; AMP biosynthesis via salvage pathway; AMP from ADP: step 1/1. In terms of biological role, catalyzes the reversible transfer of the terminal phosphate group between ATP and AMP. Plays an important role in cellular energy homeostasis and in adenine nucleotide metabolism. The protein is Adenylate kinase of Staphylococcus aureus (strain COL).